The following is a 245-amino-acid chain: Ubiquinone biosynthesis O-methyltransferase (245 aa).

Residues R44, G64, D85, and M129 each coordinate S-adenosyl-L-methionine.

Belongs to the methyltransferase superfamily. UbiG/COQ3 family.

The enzyme catalyses a 3-demethylubiquinol + S-adenosyl-L-methionine = a ubiquinol + S-adenosyl-L-homocysteine + H(+). It carries out the reaction a 3-(all-trans-polyprenyl)benzene-1,2-diol + S-adenosyl-L-methionine = a 2-methoxy-6-(all-trans-polyprenyl)phenol + S-adenosyl-L-homocysteine + H(+). It functions in the pathway cofactor biosynthesis; ubiquinone biosynthesis. Functionally, O-methyltransferase that catalyzes the 2 O-methylation steps in the ubiquinone biosynthetic pathway. The chain is Ubiquinone biosynthesis O-methyltransferase from Proteus mirabilis (strain HI4320).